The sequence spans 92 residues: uncharacterized protein (92 aa).

2 helical membrane-spanning segments follow: residues 34 to 54 (GLGIAVIIFCVCIIAFMFMFG) and 65 to 85 (LLYIVVGGVLLWGAGTFASTV).

It localises to the cell membrane. This is an uncharacterized protein from Bacillus anthracis.